Consider the following 427-residue polypeptide: 3-phosphoshikimate 1-carboxyvinyltransferase (427 aa).

3 residues coordinate 3-phosphoshikimate: Lys22, Ser23, and Arg27. Lys22 contributes to the phosphoenolpyruvate binding site. Phosphoenolpyruvate contacts are provided by Gly96 and Arg124. 3-phosphoshikimate-binding residues include Ser169, Ser170, Gln171, Ser197, Asp313, Asn336, and Lys340. Gln171 serves as a coordination point for phosphoenolpyruvate. The Proton acceptor role is filled by Asp313. Phosphoenolpyruvate contacts are provided by Arg344, Arg386, and Lys411.

This sequence belongs to the EPSP synthase family. Monomer.

The protein resides in the cytoplasm. It carries out the reaction 3-phosphoshikimate + phosphoenolpyruvate = 5-O-(1-carboxyvinyl)-3-phosphoshikimate + phosphate. It participates in metabolic intermediate biosynthesis; chorismate biosynthesis; chorismate from D-erythrose 4-phosphate and phosphoenolpyruvate: step 6/7. Its function is as follows. Catalyzes the transfer of the enolpyruvyl moiety of phosphoenolpyruvate (PEP) to the 5-hydroxyl of shikimate-3-phosphate (S3P) to produce enolpyruvyl shikimate-3-phosphate and inorganic phosphate. The sequence is that of 3-phosphoshikimate 1-carboxyvinyltransferase from Escherichia coli O9:H4 (strain HS).